The primary structure comprises 514 residues: Importin subunit alpha-3 (514 aa).

In terms of domain architecture, IBB spans 1 to 51 (MSSNRQAYYKNNAKEQIGKEKRNEEVVSIRKDKREEAISKRRNINTQIEDD). The segment at 1–62 (MSSNRQAYYK…ETSTTPPGPF (62 aa)) is disordered. Residues 12–39 (NAKEQIGKEKRNEEVVSIRKDKREEAIS) are compositionally biased toward basic and acidic residues. ARM repeat units lie at residues 101–142 (IDDL…TSEQ), 143–187 (TQAV…FRDY), 188–226 (CLEL…CKDP), 227–271 (APSP…EHIQ), 272–311 (MVIE…TDEQ), 312–353 (TQLV…NQQQ), 354–393 (VQDV…ISGR), and 394–436 (PNQV…KMAG). The disordered stretch occupies residues 485 to 514 (GNVEGAQSSAFGGDVPPVPDAPNGGWNFGK).

It belongs to the importin alpha family. As to quaternary structure, forms a complex with an importin beta subunit. May interact with transcription factor cebp-1 (via N-terminus). Interacts with cmk-1; affinity for cmk-1 is increased in the presence of Ca(2+) and calmodulin and leads to increased nuclear accumulation of cmk-1 in FLP neurons upon prolonged heat activation. As to expression, expressed in larval and adult germline and somatic tissues, including neurons.

The protein localises to the cytoplasm. The protein resides in the nucleus. Its function is as follows. Binds specifically and directly to substrates containing either a simple or bipartite NLS motif. Promotes docking of import substrates to the nuclear envelope. Seems to act as a cytosolic receptor for both simple and bipartite NLS motifs. Necessary for correct nucleoporin localization within the germline. Essential gene for embryonic and larval development. May be dispensable for axon development, but required for axon regeneration in both mechanosensory and motor neurons. Required for oogenic development, ima-1 and ima-2 cannot functionally compensate for loss of ima-3. The protein is Importin subunit alpha-3 (ima-3) of Caenorhabditis elegans.